We begin with the raw amino-acid sequence, 1585 residues long: Sterol 3-beta-glucosyltransferase (1585 aa).

The segment covering 1–18 (MSPPISPTPPPLQPPFPP) has biased composition (pro residues). Disordered stretches follow at residues 1–151 (MSPP…ESSF), 177–225 (PWEE…PTHT), and 249–279 (YQYATPETSSRRTSAAGSESSSEGEVPLPKG). 3 stretches are compositionally biased toward polar residues: residues 65–92 (DQATNSSNDSLIPSRQAPNQEETENAIT), 105–123 (DAQTVRFSSSSPASYSTHE), and 132–148 (PRTSSRAPNTASSQMAE). A compositionally biased stretch (acidic residues) spans 178–194 (WEEDDDSDDGEDDDEFI). Over residues 255-273 (ETSSRRTSAAGSESSSEGE) the composition is skewed to low complexity. In terms of domain architecture, GRAM 1 spans 387-555 (ERLMEVFGLE…EAIVDVEKSP (169 aa)). One can recognise a PH domain in the interval 438–530 (LLVKSGPLHK…WVKAIQKVMF (93 aa)). Disordered stretches follow at residues 625–645 (TSHATIKRHGTDSSAEKLGMA) and 666–852 (DGEP…GSES). Residues 670–689 (LEEHSQGPHHNDEDASHLPH) are compositionally biased toward basic and acidic residues. Composition is skewed to polar residues over residues 760 to 785 (TDSSTTVTESGPSLRSRTGRTKQASV), 806 to 817 (NKPSVVDSNSAE), and 827 to 840 (SWTSETSSGSQMVK). A GRAM 2 domain is found at 862-933 (RKFRTFFALS…RDLYGLKAQK (72 aa)). 10 residues coordinate UDP-alpha-D-glucose: serine 1043, arginine 1044, aspartate 1046, isoleucine 1358, histidine 1360, histidine 1373, glycine 1377, threonine 1378, aspartate 1397, and glutamine 1398. Residues 1499–1552 (NRVRSRSRSRSRSSQGRFSPRRHTVDDDGWSVVSGGSRSRSGSASAVTSPERRP) form a disordered region. The span at 1529–1545 (SVVSGGSRSRSGSASAV) shows a compositional bias: low complexity.

Belongs to the glycosyltransferase 28 family.

It localises to the cytoplasm. The protein resides in the membrane. The catalysed reaction is a sterol + UDP-alpha-D-glucose = a sterol 3-beta-D-glucoside + UDP + H(+). It catalyses the reaction ergosterol + UDP-alpha-D-glucose = ergosteryl 3-beta-D-glucoside + UDP + H(+). Its function is as follows. Sterol glycosyltransferase responsible for the glycosylation of ergosterol to form ergosterol-glucoside. The chain is Sterol 3-beta-glucosyltransferase from Cryptococcus neoformans var. neoformans serotype D (strain B-3501A) (Filobasidiella neoformans).